We begin with the raw amino-acid sequence, 304 residues long: MIYTMKKVHALWVSICLMLNLAPAPLNADSEEDEEYTIITDTELPPLKLMHSFCAFKPDDGPCKAIMKRFFFNIFTRQCEEFIYGGCGGNQNRFESMEECKKVCTRDNVHRIIQTALQQEKPDFCFLEEDPGICRGYITRYFYNNQSKQCERFKYGGCLGNMNNFETLEECKNTCEDGLNGFQVDNYGTQLNAVNNSQTPQSTKVPSFFEFHGPSWCLAPADRGLCRANENRFYYNSVIGKCRPFKYSGCGGNENNFTSKRECLRACKKGFIQRISKGGLIKTKRKRKKQRVKIAYEEVFVKNM.

Positions 1 to 28 (MIYTMKKVHALWVSICLMLNLAPAPLNA) are cleaved as a signal peptide. 2 consecutive BPTI/Kunitz inhibitor domains span residues 54–104 (CAFK…KKVC) and 125–175 (CFLE…KNTC). 6 disulfides stabilise this stretch: Cys54/Cys104, Cys63/Cys87, Cys79/Cys100, Cys125/Cys175, Cys134/Cys158, and Cys150/Cys171. An N-linked (GlcNAc...) asparagine glycan is attached at Asn145. Residue Asn195 is glycosylated (N-linked (GlcNAc...) asparagine). In terms of domain architecture, BPTI/Kunitz inhibitor 3 spans 217 to 267 (CLAPADRGLCRANENRFYYNSVIGKCRPFKYSGCGGNENNFTSKRECLRAC). Cystine bridges form between Cys217–Cys267, Cys226–Cys250, and Cys242–Cys263. The N-linked (GlcNAc...) asparagine glycan is linked to Asn256.

In terms of processing, O-glycosylated.

It localises to the secreted. Functionally, inhibits factor X (X(a)) directly and, in a Xa-dependent way, inhibits VIIa/tissue factor activity, presumably by forming a quaternary Xa/LACI/VIIa/TF complex. It possesses an antithrombotic action and also the ability to associate with lipoproteins in plasma. In Macaca mulatta (Rhesus macaque), this protein is Tissue factor pathway inhibitor (TFPI).